Here is a 117-residue protein sequence, read N- to C-terminus: uncharacterized protein (117 aa).

It is found in the plastid. The protein localises to the chloroplast. This is an uncharacterized protein from Chlamydomonas reinhardtii (Chlamydomonas smithii).